Here is a 59-residue protein sequence, read N- to C-terminus: Antibacterial peptide enbocin (59 aa).

Residues 1-20 (MNFTRIIFFLFVVVFATASG) form the signal peptide. Lysine 21 is a propeptide. Serine 58 bears the Serine amide mark.

The protein belongs to the cecropin family.

It is found in the secreted. Functionally, has antibacterial activity against Gram-positive and Gram-negative bacteria. The protein is Antibacterial peptide enbocin of Bombyx mori (Silk moth).